The sequence spans 334 residues: uncharacterized protein (334 aa).

This sequence belongs to the MG414/MG415 family.

This is an uncharacterized protein from Mycoplasma pneumoniae (strain ATCC 29342 / M129 / Subtype 1) (Mycoplasmoides pneumoniae).